Here is a 425-residue protein sequence, read N- to C-terminus: Serine--tRNA ligase (425 aa).

Thr233–Glu235 lines the L-serine pocket. Residue Arg264–Glu266 coordinates ATP. Glu287 is a binding site for L-serine. ATP is bound at residue Glu351–Ser354. Ser385 contributes to the L-serine binding site.

The protein belongs to the class-II aminoacyl-tRNA synthetase family. Type-1 seryl-tRNA synthetase subfamily. As to quaternary structure, homodimer. The tRNA molecule binds across the dimer.

Its subcellular location is the cytoplasm. It carries out the reaction tRNA(Ser) + L-serine + ATP = L-seryl-tRNA(Ser) + AMP + diphosphate + H(+). It catalyses the reaction tRNA(Sec) + L-serine + ATP = L-seryl-tRNA(Sec) + AMP + diphosphate + H(+). Its pathway is aminoacyl-tRNA biosynthesis; selenocysteinyl-tRNA(Sec) biosynthesis; L-seryl-tRNA(Sec) from L-serine and tRNA(Sec): step 1/1. In terms of biological role, catalyzes the attachment of serine to tRNA(Ser). Is also able to aminoacylate tRNA(Sec) with serine, to form the misacylated tRNA L-seryl-tRNA(Sec), which will be further converted into selenocysteinyl-tRNA(Sec). This is Serine--tRNA ligase from Synechococcus sp. (strain WH7803).